Reading from the N-terminus, the 197-residue chain is RNA pyrophosphohydrolase (197 aa).

In terms of domain architecture, Nudix hydrolase spans 6–150 (GYRPNVGIVI…KRDVYRKVMR (145 aa)). The Nudix box signature appears at 38–59 (GGINEGENIETAMYRELYEEVG).

Belongs to the Nudix hydrolase family. RppH subfamily. It depends on a divalent metal cation as a cofactor.

In terms of biological role, accelerates the degradation of transcripts by removing pyrophosphate from the 5'-end of triphosphorylated RNA, leading to a more labile monophosphorylated state that can stimulate subsequent ribonuclease cleavage. The sequence is that of RNA pyrophosphohydrolase from Haemophilus ducreyi (strain 35000HP / ATCC 700724).